The following is a 1482-amino-acid chain: Glutamate receptor ionotropic, NMDA 2B (1482 aa).

Positions 1–26 are cleaved as a signal peptide; sequence MKPSAECCSPKFWLVLAVLAVSGSKA. Residues 27-557 lie on the Extracellular side of the membrane; the sequence is RSQKSPPSIG…SAFLEPFSAD (531 aa). N-linked (GlcNAc...) asparagine glycosylation occurs at Asn74. Cys86 and Cys321 are disulfide-bonded. Residues His127 and Glu284 each coordinate Zn(2+). Asn341, Asn348, Asn444, and Asn491 each carry an N-linked (GlcNAc...) asparagine glycan. Intrachain disulfides connect Cys429/Cys456 and Cys436/Cys457. Residues Thr514 and Arg519 each contribute to the L-glutamate site. An N-linked (GlcNAc...) asparagine glycan is attached at Asn542. Residues 558–576 traverse the membrane as a helical segment; sequence VWVMMFVMLLIVSAVAVFV. Residues 577 to 603 are Cytoplasmic-facing; sequence FEYFSPVGYNRCLADGREPGGPSFTIG. An intramembrane region (discontinuously helical) is located at residues 604-623; that stretch reads KAIWLLWGLVFNNSVPVQNP. Residues 604–623 form a pore-forming region; that stretch reads KAIWLLWGLVFNNSVPVQNP. At 624–630 the chain is on the cytoplasmic side; the sequence is KGTTSKI. The chain crosses the membrane as a helical span at residues 631–646; that stretch reads MVSVWAFFAVIFLASY. Topologically, residues 647–817 are extracellular; the sequence is TANLAAFMIQ…VMSSQLDIDN (171 aa). Asn688 carries N-linked (GlcNAc...) asparagine glycosylation. 3 residues coordinate L-glutamate: Ser690, Thr691, and Asp732. Cysteines 746 and 801 form a disulfide. Residues 818–837 form a helical membrane-spanning segment; it reads MAGVFYMLGAAMALSLITFI. At 838-1482 the chain is on the cytoplasmic side; sequence CEHLFYWQFR…EKLSSIESDV (645 aa). A phosphoserine mark is found at Ser882, Ser886, Ser917, and Ser920. Tyr962 and Tyr1039 each carry phosphotyrosine. Phosphoserine occurs at positions 1058, 1061, and 1064. 2 positions are modified to phosphotyrosine: Tyr1109 and Tyr1133. Ser1143 carries the phosphoserine modification. At Tyr1155 the chain carries Phosphotyrosine. The interval 1161–1194 is disordered; that stretch reads DFKRDSVSGGGPCTNRSHLKHGTGEKHGVVGGVP. Residues Ser1255 and Ser1259 each carry the phosphoserine modification. A disordered region spans residues 1269–1301; it reads PVAVTSNASSTKYPQSPTNSKAQKKNRNKLRRQ. Positions 1272–1289 are enriched in polar residues; sequence VTSNASSTKYPQSPTNSK. Over residues 1290 to 1301 the composition is skewed to basic residues; that stretch reads AQKKNRNKLRRQ. Residues 1292–1304 form an interaction with DAPK1 region; sequence KKNRNKLRRQHSY. Ser1303 bears the Phosphoserine mark. Position 1472 is a phosphotyrosine (Tyr1472). The short motif at 1480-1482 is the PDZ-binding element; it reads SDV.

The protein belongs to the glutamate-gated ion channel (TC 1.A.10.1) family. NR2B/GRIN2B subfamily. Heterotetramer. Forms heterotetrameric channels composed of two GluN1/zeta subunits (GRIN1), and two identical GluN2/epsilon subunits (GRIN2A, GRIN2B, GRIN2C or GRIN2D) or GluN3 subunits (GRIN3A or GRIN3B) (in vitro). Can also form heterotetrameric channels that contain at least two GluN1 subunits and at least two different GluN2 subunits (or a combination of one GluN2 and one GluN3 subunits) (in vitro). In vivo, the subunit composition may depend on the expression levels of the different subunits. Found in a complex with GRIN1, GRIN3A and PPP2CB. Found in a complex with GRIN1 and GRIN3B. Interacts with MAGI3. Interacts with HIP1 and NETO1. Interacts with PDZ domains of PATJ, DLG3 and DLG4. Interacts with DAPK1. Found in a complex with GRIN1 and PRR7. Interacts with PRR7. Interacts with CAMK2A. Interacts with ARC; preventing ARC oligomerization. Interacts with TMEM25. Interacts (via the extreme C-terminus) with FRMPD2 (via the second PDZ domain); the interaction is direct and is likely to promote NMDAR-mediated neural signal transmission. Interacts with FAM81A; the interaction facilitates condensate formation via liquid-liquid phase separation. Phosphorylated on tyrosine residues. Phosphorylation at Ser-1303 by DAPK1 enhances synaptic NMDA receptor channel activity. As to expression, expressed in the hippocampus including the dentate gyrus (at protein level). Detected in adult olfactory bulb, brain cortex, hippocampus, striatum, thalamus, superior colliculus, with much lower levels in inferior colliculus, midbrain and cerebellum.

It localises to the cell membrane. Its subcellular location is the postsynaptic cell membrane. The protein resides in the late endosome. The protein localises to the lysosome. It is found in the cytoplasm. It localises to the cytoskeleton. The catalysed reaction is Ca(2+)(in) = Ca(2+)(out). It carries out the reaction Na(+)(in) = Na(+)(out). The enzyme catalyses K(+)(in) = K(+)(out). With respect to regulation, NMDA glutamate receptor activity is inhibited by micromolar levels of zinc ions. NMDA glutamate receptor activity is inhibited by ifenprodil. Its function is as follows. Component of N-methyl-D-aspartate (NMDA) receptors (NMDARs) that function as heterotetrameric, ligand-gated cation channels with high calcium permeability and voltage-dependent block by Mg(2+). Participates in synaptic plasticity for learning and memory formation by contributing to the long-term depression (LTD) of hippocampus membrane currents. Channel activation requires binding of the neurotransmitter L-glutamate to the GluN2 subunit, glycine or D-serine binding to the GluN1 subunit, plus membrane depolarization to eliminate channel inhibition by Mg(2+). NMDARs mediate simultaneously the potasium efflux and the influx of calcium and sodium. Each GluN2 subunit confers differential attributes to channel properties, including activation, deactivation and desensitization kinetics, pH sensitivity, Ca2(+) permeability, and binding to allosteric modulators. In concert with DAPK1 at extrasynaptic sites, acts as a central mediator for stroke damage. Its phosphorylation at Ser-1303 by DAPK1 enhances synaptic NMDA receptor channel activity inducing injurious Ca2+ influx through them, resulting in an irreversible neuronal death. This Rattus norvegicus (Rat) protein is Glutamate receptor ionotropic, NMDA 2B.